Consider the following 208-residue polypeptide: Thymidylate kinase (208 aa).

Residue Gly-10 to Ser-17 participates in ATP binding.

The protein belongs to the thymidylate kinase family.

The enzyme catalyses dTMP + ATP = dTDP + ADP. Its function is as follows. Phosphorylation of dTMP to form dTDP in both de novo and salvage pathways of dTTP synthesis. The polypeptide is Thymidylate kinase (Rhizorhabdus wittichii (strain DSM 6014 / CCUG 31198 / JCM 15750 / NBRC 105917 / EY 4224 / RW1) (Sphingomonas wittichii)).